Here is a 1292-residue protein sequence, read N- to C-terminus: Epidermal growth factor receptor (1292 aa).

Residues 1-641 (MYNNYNLCHI…AGLIENELQP (641 aa)) are Extracellular-facing. N-linked (GlcNAc...) asparagine glycosylation is found at Asn-31, Asn-224, Asn-263, Asn-323, Asn-342, Asn-600, and Asn-605. A helical transmembrane segment spans residues 642–662 (AILAGVAVFALAFLVVAAIIM). Topologically, residues 663–1292 (YFWRVRAKAK…KPLRKNETTV (630 aa)) are cytoplasmic. The residue at position 675 (Thr-675) is a Phosphothreonine; by PKC. Positions 711–978 (MRKGGILGYG…KMSRDPGRYL (268 aa)) constitute a Protein kinase domain. ATP is bound by residues 717-725 (LGYGAFGNV) and Lys-744. The active-site Proton acceptor is the Asp-836. Residues 1022-1066 (PKSRAPIPPGLSASSTSGSPPNTPVKPCWPNGKPLAADSPTPQNQ) form a disordered region. At Tyr-1166 the chain carries Phosphotyrosine; by autocatalysis. Residues 1253 to 1292 (SQVRQRSSEEESDHEYYNDFDRLERELQPLKPLRKNETTV) are disordered. Residues 1258–1292 (RSSEEESDHEYYNDFDRLERELQPLKPLRKNETTV) show a composition bias toward basic and acidic residues.

Belongs to the protein kinase superfamily. Tyr protein kinase family. EGF receptor subfamily.

The protein localises to the membrane. The catalysed reaction is L-tyrosyl-[protein] + ATP = O-phospho-L-tyrosyl-[protein] + ADP + H(+). With respect to regulation, activated by MRJP1 during queen determination of honeybee larvae. Upon binding to its ligands, transduces the signal through the ras-raf-MAPK pathway and is involved in a myriad of developmental decisions. Involved in the determination of adult size, ovary development, and development timing, especially during queen determination of honeybee larvae. May have an important role in the prolongation of longevity in queens. The sequence is that of Epidermal growth factor receptor (Egfr) from Apis mellifera (Honeybee).